A 518-amino-acid chain; its full sequence is Probable malate:quinone oxidoreductase (518 aa).

The interval G495–V518 is disordered. Positions T501 to V518 are enriched in polar residues.

Belongs to the MQO family. FAD serves as cofactor.

The catalysed reaction is (S)-malate + a quinone = a quinol + oxaloacetate. The protein operates within carbohydrate metabolism; tricarboxylic acid cycle; oxaloacetate from (S)-malate (quinone route): step 1/1. This chain is Probable malate:quinone oxidoreductase, found in Mycolicibacterium gilvum (strain PYR-GCK) (Mycobacterium gilvum (strain PYR-GCK)).